Here is a 118-residue protein sequence, read N- to C-terminus: Large ribosomal subunit protein uL24 (118 aa).

The protein belongs to the universal ribosomal protein uL24 family. In terms of assembly, part of the 50S ribosomal subunit.

One of two assembly initiator proteins, it binds directly to the 5'-end of the 23S rRNA, where it nucleates assembly of the 50S subunit. In terms of biological role, one of the proteins that surrounds the polypeptide exit tunnel on the outside of the subunit. This is Large ribosomal subunit protein uL24 from Prochlorococcus marinus (strain MIT 9303).